A 513-amino-acid polypeptide reads, in one-letter code: Histidine ammonia-lyase (513 aa).

A cross-link (5-imidazolinone (Ala-Gly)) is located at residues 146–148; that stretch reads ASG. Residue Ser147 is modified to 2,3-didehydroalanine (Ser).

This sequence belongs to the PAL/histidase family. In terms of processing, contains an active site 4-methylidene-imidazol-5-one (MIO), which is formed autocatalytically by cyclization and dehydration of residues Ala-Ser-Gly.

The protein localises to the cytoplasm. It carries out the reaction L-histidine = trans-urocanate + NH4(+). It functions in the pathway amino-acid degradation; L-histidine degradation into L-glutamate; N-formimidoyl-L-glutamate from L-histidine: step 1/3. This Caulobacter vibrioides (strain NA1000 / CB15N) (Caulobacter crescentus) protein is Histidine ammonia-lyase.